Here is a 430-residue protein sequence, read N- to C-terminus: Gamma-glutamyl phosphate reductase (430 aa).

Belongs to the gamma-glutamyl phosphate reductase family.

The protein resides in the cytoplasm. The enzyme catalyses L-glutamate 5-semialdehyde + phosphate + NADP(+) = L-glutamyl 5-phosphate + NADPH + H(+). It participates in amino-acid biosynthesis; L-proline biosynthesis; L-glutamate 5-semialdehyde from L-glutamate: step 2/2. In terms of biological role, catalyzes the NADPH-dependent reduction of L-glutamate 5-phosphate into L-glutamate 5-semialdehyde and phosphate. The product spontaneously undergoes cyclization to form 1-pyrroline-5-carboxylate. The protein is Gamma-glutamyl phosphate reductase of Rhodopseudomonas palustris (strain HaA2).